Reading from the N-terminus, the 172-residue chain is Nicotinamide-nucleotide adenylyltransferase (172 aa).

The protein belongs to the archaeal NMN adenylyltransferase family.

It is found in the cytoplasm. The catalysed reaction is beta-nicotinamide D-ribonucleotide + ATP + H(+) = diphosphate + NAD(+). The protein operates within cofactor biosynthesis; NAD(+) biosynthesis; NAD(+) from nicotinamide D-ribonucleotide: step 1/1. The chain is Nicotinamide-nucleotide adenylyltransferase from Methanococcus vannielii (strain ATCC 35089 / DSM 1224 / JCM 13029 / OCM 148 / SB).